Reading from the N-terminus, the 249-residue chain is tRNA pseudouridine synthase A (249 aa).

Asp53 (nucleophile) is an active-site residue. Tyr111 serves as a coordination point for substrate.

It belongs to the tRNA pseudouridine synthase TruA family. As to quaternary structure, homodimer.

It catalyses the reaction uridine(38/39/40) in tRNA = pseudouridine(38/39/40) in tRNA. Functionally, formation of pseudouridine at positions 38, 39 and 40 in the anticodon stem and loop of transfer RNAs. The chain is tRNA pseudouridine synthase A from Streptococcus pneumoniae serotype 2 (strain D39 / NCTC 7466).